The chain runs to 244 residues: Large ribosomal subunit protein uL3 (244 aa).

Belongs to the universal ribosomal protein uL3 family. In terms of assembly, part of the 50S ribosomal subunit. Forms a cluster with proteins L14 and L19.

In terms of biological role, one of the primary rRNA binding proteins, it binds directly near the 3'-end of the 23S rRNA, where it nucleates assembly of the 50S subunit. This Aquifex pyrophilus protein is Large ribosomal subunit protein uL3.